The following is a 547-amino-acid chain: Undecaprenyl phosphate-alpha-4-amino-4-deoxy-L-arabinose arabinosyl transferase (547 aa).

10 helical membrane-spanning segments follow: residues 83 to 103 (FASA…ALQL), 111 to 131 (FLAS…TYSV), 174 to 194 (FLTK…PYVI), 205 to 225 (FGPL…IAVH), 253 to 273 (APFW…LGLL), 286 to 306 (ISPE…FFSI), 311 to 331 (LLTY…ANAV), 346 to 366 (AWLN…LAFS), 378 to 398 (GALA…FIQL), and 408 to 428 (SALC…QSLI).

It belongs to the glycosyltransferase 83 family.

Its subcellular location is the cell inner membrane. It carries out the reaction 4-amino-4-deoxy-alpha-L-arabinopyranosyl di-trans,octa-cis-undecaprenyl phosphate + lipid IVA = lipid IIA + di-trans,octa-cis-undecaprenyl phosphate.. It participates in lipopolysaccharide metabolism; 4-amino-4-deoxy-beta-L-arabinose-lipid A biosynthesis. Catalyzes the transfer of the L-Ara4N moiety of the glycolipid undecaprenyl phosphate-alpha-L-Ara4N to lipid A. The modified arabinose is attached to lipid A and is required for resistance to polymyxin and cationic antimicrobial peptides. This is Undecaprenyl phosphate-alpha-4-amino-4-deoxy-L-arabinose arabinosyl transferase from Aeromonas hydrophila subsp. hydrophila (strain ATCC 7966 / DSM 30187 / BCRC 13018 / CCUG 14551 / JCM 1027 / KCTC 2358 / NCIMB 9240 / NCTC 8049).